We begin with the raw amino-acid sequence, 325 residues long: Tagatose 1,6-diphosphate aldolase 1 (325 aa).

It belongs to the aldolase LacD family.

It carries out the reaction D-tagatofuranose 1,6-bisphosphate = D-glyceraldehyde 3-phosphate + dihydroxyacetone phosphate. It participates in carbohydrate metabolism; D-tagatose 6-phosphate degradation; D-glyceraldehyde 3-phosphate and glycerone phosphate from D-tagatose 6-phosphate: step 2/2. The chain is Tagatose 1,6-diphosphate aldolase 1 (lacD1) from Streptococcus pyogenes serotype M1.